Here is a 463-residue protein sequence, read N- to C-terminus: ATP-dependent protease ATPase subunit HslU (463 aa).

ATP contacts are provided by residues Ile-19 and Gly-61–Glu-66. Residues Phe-154 to Lys-174 are disordered. ATP-binding residues include Asp-277, Glu-341, and Arg-413.

The protein belongs to the ClpX chaperone family. HslU subfamily. As to quaternary structure, a double ring-shaped homohexamer of HslV is capped on each side by a ring-shaped HslU homohexamer. The assembly of the HslU/HslV complex is dependent on binding of ATP.

Its subcellular location is the cytoplasm. ATPase subunit of a proteasome-like degradation complex; this subunit has chaperone activity. The binding of ATP and its subsequent hydrolysis by HslU are essential for unfolding of protein substrates subsequently hydrolyzed by HslV. HslU recognizes the N-terminal part of its protein substrates and unfolds these before they are guided to HslV for hydrolysis. The chain is ATP-dependent protease ATPase subunit HslU from Bacillus cereus (strain G9842).